A 201-amino-acid polypeptide reads, in one-letter code: UPF0301 protein RHECIAT_CH0001061 (201 aa).

It belongs to the UPF0301 (AlgH) family.

In Rhizobium etli (strain CIAT 652), this protein is UPF0301 protein RHECIAT_CH0001061.